The chain runs to 183 residues: Phosphinothricin N-acetyltransferase (183 aa).

An N-acetyltransferase domain is found at 8–173; sequence ADIRRATEAD…WQLDFSLPVP (166 aa). Acetyl-CoA contacts are provided by residues 91 to 93, 99 to 104, and N130; these read VYV and RTGLGS.

The protein belongs to the acetyltransferase family. PAT/BAR subfamily.

It carries out the reaction phosphinothricin + acetyl-CoA = N-acetylphosphinothricin + CoA + H(+). Its function is as follows. Inactivates phosphinothricin (PPT) by transfer of an acetyl group from acetyl CoA. Can also acetylate demethylphosphinothricin but not PTT or glutamate. This enzyme is an effector of phosphinothricin tripeptide (PTT or bialaphos) resistance. The sequence is that of Phosphinothricin N-acetyltransferase from Streptomyces hygroscopicus.